The chain runs to 447 residues: Protein disulfide-isomerase like 2-2 (447 aa).

The N-terminal stretch at 1-26 (MERKMYKSTVFPICCLLFALFDRGNA) is a signal peptide. Thioredoxin domains follow at residues 27-139 (LYGS…QIKA) and 161-275 (KKKS…QLES). Residues C62 and C65 each act as nucleophile in the active site. An intrachain disulfide couples C62 to C65. The tract at residues 146 to 170 (DGKTSGTKNGGGSSEKKKSEPSASV) is disordered. An N-linked (GlcNAc...) asparagine glycan is attached at N173. Residues C197 and C200 each act as nucleophile in the active site. C197 and C200 are joined by a disulfide. The Prevents secretion from ER motif lies at 444-447 (KDDL).

The protein belongs to the protein disulfide isomerase family. In terms of tissue distribution, widely expressed.

It is found in the endoplasmic reticulum lumen. It carries out the reaction Catalyzes the rearrangement of -S-S- bonds in proteins.. In terms of biological role, acts as a protein-folding catalyst that interacts with nascent polypeptides to catalyze the formation, isomerization, and reduction or oxidation of disulfide bonds. This is Protein disulfide-isomerase like 2-2 (PDIL2-2) from Arabidopsis thaliana (Mouse-ear cress).